We begin with the raw amino-acid sequence, 138 residues long: ATP synthase epsilon chain (138 aa).

It belongs to the ATPase epsilon chain family. In terms of assembly, F-type ATPases have 2 components, CF(1) - the catalytic core - and CF(0) - the membrane proton channel. CF(1) has five subunits: alpha(3), beta(3), gamma(1), delta(1), epsilon(1). CF(0) has three main subunits: a, b and c.

It localises to the cell membrane. Its function is as follows. Produces ATP from ADP in the presence of a proton gradient across the membrane. In Streptococcus mutans serotype c (strain ATCC 700610 / UA159), this protein is ATP synthase epsilon chain (atpC).